The chain runs to 274 residues: Dermonecrotic toxin SdSicTox-betaIIB1bx (274 aa).

His-5 is a catalytic residue. Positions 25 and 27 each coordinate Mg(2+). His-41 (nucleophile) is an active-site residue. Cystine bridges form between Cys-45–Cys-51 and Cys-47–Cys-190. Asp-85 contacts Mg(2+).

It belongs to the arthropod phospholipase D family. Class II subfamily. Requires Mg(2+) as cofactor. Expressed by the venom gland.

It is found in the secreted. The catalysed reaction is an N-(acyl)-sphingosylphosphocholine = an N-(acyl)-sphingosyl-1,3-cyclic phosphate + choline. The enzyme catalyses an N-(acyl)-sphingosylphosphoethanolamine = an N-(acyl)-sphingosyl-1,3-cyclic phosphate + ethanolamine. It carries out the reaction a 1-acyl-sn-glycero-3-phosphocholine = a 1-acyl-sn-glycero-2,3-cyclic phosphate + choline. It catalyses the reaction a 1-acyl-sn-glycero-3-phosphoethanolamine = a 1-acyl-sn-glycero-2,3-cyclic phosphate + ethanolamine. Functionally, dermonecrotic toxins cleave the phosphodiester linkage between the phosphate and headgroup of certain phospholipids (sphingolipid and lysolipid substrates), forming an alcohol (often choline) and a cyclic phosphate. This toxin acts on sphingomyelin (SM). It may also act on ceramide phosphoethanolamine (CPE), lysophosphatidylcholine (LPC) and lysophosphatidylethanolamine (LPE), but not on lysophosphatidylserine (LPS), and lysophosphatidylglycerol (LPG). It acts by transphosphatidylation, releasing exclusively cyclic phosphate products as second products. Induces dermonecrosis, hemolysis, increased vascular permeability, edema, inflammatory response, and platelet aggregation. The sequence is that of Dermonecrotic toxin SdSicTox-betaIIB1bx from Sicarius cf. damarensis (strain GJB-2008) (Six-eyed sand spider).